We begin with the raw amino-acid sequence, 190 residues long: Protein LZIC (190 aa).

Residues 2-63 (ASRGKTETSK…SEFNDSLKKI (62 aa)) adopt a coiled-coil conformation.

It belongs to the CTNNBIP1 family. Does not interact with CTNNB1.

This is Protein LZIC (Lzic) from Rattus norvegicus (Rat).